Consider the following 352-residue polypeptide: C-X-C chemokine receptor type 4 (352 aa).

Residues 1–21 (MEGISIYTSDNYTEEMGSGDY) are important for chemokine binding and signaling. The Extracellular segment spans residues 1 to 38 (MEGISIYTSDNYTEEMGSGDYDSIKEPCFREKNAHFNR). Tyr-7 carries the post-translational modification Sulfotyrosine. Asn-11 carries an N-linked (GlcNAc...) asparagine glycan. Residue Tyr-12 is modified to Sulfotyrosine. O-linked (Xyl...) (chondroitin sulfate) serine glycosylation occurs at Ser-18. Tyr-21 carries the sulfotyrosine modification. Disulfide bonds link Cys-28-Cys-274 and Cys-109-Cys-186. A helical membrane pass occupies residues 39–63 (IFLPTIYSIIFLTGIVGNGLVILVM). Residues 64–77 (GYQKKLRSMTDKYR) lie on the Cytoplasmic side of the membrane. A helical membrane pass occupies residues 78–99 (LHLSVADLLFVITLPFWAVDAV). The tract at residues 94–97 (WAVD) is chemokine binding. The Extracellular segment spans residues 100–110 (ANWYFGNFLCK). A helical membrane pass occupies residues 111–130 (AVHVIYTVNLYSSVLILAFI). Residues 113 to 117 (HVIYT) form a chemokine binding region. Over 131–154 (SLDRYLAIVHATNSQKPRKLLAEK) the chain is Cytoplasmic. The Important for signaling signature appears at 133–135 (DRY). The involved in dimerization; when bound to chemokine stretch occupies residues 135-147 (YLAIVHATNSQKP). The helical transmembrane segment at 155–174 (VVYVGVWIPALLLTIPGFIF) threads the bilayer. Topologically, residues 175 to 195 (ASVSEADDRFICDRFYPNDLW) are extracellular. The interval 186-190 (CDRFY) is chemokine binding, important for signaling. An involved in dimerization region spans residues 191 to 210 (PNDLWVVVFQFQHIMVGLIL). The helical transmembrane segment at 196–216 (VVVFQFQHIMVGLILPGIVIL) threads the bilayer. Residues 217–241 (SCYCIIISKLSHSKGHQKRKALKTT) are Cytoplasmic-facing. A helical transmembrane segment spans residues 242 to 261 (VILILAFFACWLPYYIGISI). Residues 262–282 (DSFILLEIIKQGCEFENTVHK) are Extracellular-facing. Positions 266-268 (LLE) are involved in dimerization. A helical membrane pass occupies residues 283–302 (WISITEALAFFHCCLNPILY). The Cytoplasmic portion of the chain corresponds to 303-352 (AFLGAKFKTSAQHALTSVSRGSSLKILSKGKRGGHSSVSTESESSSFHSS). Phosphoserine occurs at positions 319 and 321. Phosphoserine; by PKC and GRK6 occurs at positions 324 and 325. The tract at residues 329–352 (LSKGKRGGHSSVSTESESSSFHSS) is disordered. At Ser-330 the chain carries Phosphoserine; by GRK6. A Glycyl lysine isopeptide (Lys-Gly) (interchain with G-Cter in ubiquitin) cross-link involves residue Lys-331. Residues 337–352 (HSSVSTESESSSFHSS) show a composition bias toward low complexity. Phosphoserine; by GRK6 is present on Ser-339. 2 positions are modified to phosphoserine: Ser-348 and Ser-351.

The protein belongs to the G-protein coupled receptor 1 family. In terms of assembly, monomer. Can form homodimers. Interacts with CD164. Interacts with ARRB2; the interaction is dependent on the C-terminal phosphorylation of CXCR4 and allows activation of MAPK1 and MAPK3. Interacts with ARR3; the interaction is dependent on the C-terminal phosphorylation of CXCR4 and modulates calcium mobilization. Interacts with RNF113A; the interaction, enhanced by CXCL12, promotes CXCR4 ubiquitination and subsequent degradation. Interacts (via the cytoplasmic C-terminal) with ITCH (via the WW domains I and II); the interaction, enhanced by CXCL12, promotes CXCR4 ubiquitination and leads to its degradation. Interacts with extracellular ubiquitin. Interacts with DBN1; this interaction is enhanced by antigenic stimulation. Following LPS binding, may form a complex with GDF5, HSP90AA1 and HSPA8. In terms of processing, phosphorylated on agonist stimulation. Rapidly phosphorylated on serine and threonine residues in the C-terminal. Phosphorylation at Ser-324 and Ser-325 leads to recruitment of ITCH, ubiquitination and protein degradation. Post-translationally, ubiquitinated after ligand binding, leading to its degradation. Ubiquitinated by ITCH at the cell membrane on agonist stimulation. The ubiquitin-dependent mechanism, endosomal sorting complex required for transport (ESCRT), then targets CXCR4 for lysosomal degradation. This process is dependent also on prior Ser-/Thr-phosphorylation in the C-terminal of CXCR4. Also binding of ARRB1 to STAM negatively regulates CXCR4 sorting to lysosomes though modulating ubiquitination of SFR5S. Sulfation is required for efficient binding of CXCL12/SDF-1alpha and promotes its dimerization. In terms of processing, O- and N-glycosylated. N-glycosylation can mask coreceptor function. The O-glycosylation chondroitin sulfate attachment does not affect interaction with CXCL12/SDF-1alpha nor its coreceptor activity.

The protein resides in the cell membrane. The protein localises to the cell junction. It localises to the early endosome. It is found in the late endosome. Its subcellular location is the lysosome. Receptor for the C-X-C chemokine CXCL12/SDF-1 that transduces a signal by increasing intracellular calcium ion levels and enhancing MAPK1/MAPK3 activation. Involved in the AKT signaling cascade. Plays a role in regulation of cell migration, e.g. during wound healing. Acts as a receptor for extracellular ubiquitin; leading to enhanced intracellular calcium ions and reduced cellular cAMP levels. Binds bacterial lipopolysaccharide (LPS) et mediates LPS-induced inflammatory response, including TNF secretion by monocytes. Involved in hematopoiesis and in cardiac ventricular septum formation. Also plays an essential role in vascularization of the gastrointestinal tract, probably by regulating vascular branching and/or remodeling processes in endothelial cells. Involved in cerebellar development. In the CNS, could mediate hippocampal-neuron survival. The protein is C-X-C chemokine receptor type 4 (CXCR4) of Cercocebus atys (Sooty mangabey).